A 143-amino-acid chain; its full sequence is Large ribosomal subunit protein uL16 (143 aa).

Positions 1-26 (MSMALLPRRVKYRKSQRGSRKGNATR) are disordered. Over residues 8–20 (RRVKYRKSQRGSR) the composition is skewed to basic residues.

The protein belongs to the universal ribosomal protein uL16 family. Part of the 50S ribosomal subunit.

Functionally, binds 23S rRNA and is also seen to make contacts with the A and possibly P site tRNAs. The protein is Large ribosomal subunit protein uL16 of Methylacidiphilum infernorum (isolate V4) (Methylokorus infernorum (strain V4)).